An 82-amino-acid chain; its full sequence is Nuclear protein 1 (82 aa).

The interval 1–82 (MATFPPATSA…SERKKRGARR (82 aa)) is disordered. The segment covering 17 to 28 (PEDEDSSLDESD) has biased composition (acidic residues). A Nuclear localization signal motif is present at residues 65–82 (KLVTKLQNSERKKRGARR).

Belongs to the NUPR family. In terms of assembly, monomer. Directly interacts with MSL1 and binds MORF4L1, two components of histone acetyltransferase complex; the interaction with MORF4L1 may be mediated by MSL1. Interacts with EP300; this interaction enhances the effect of EP300 on PAX2 transcription factor activity. Interacts with PAXIP1; this interaction prevents PAXIP1 inhibition of PAX2 transcription factor activity. Interacts with COPS5; this interaction allows COPS5-dependent CDKN1B nuclear to cytoplasm translocation. Interacts with RNF2. Interacts with FOXO3; this interaction represses FOXO3 transactivation. Interacts with PTMA; negatively regulates apoptotic process. Interacts with MYOD1, EP300 and DDX5; this interaction coordinates the association of anti-proliferative and pro-myogenic proteins at the myogenin promoter. Interacts with TP53; interaction is stress-dependent. Forms a complex with EP300 and TP53; this complex binds CDKN1A promoter leading to transcriptional induction of CDKN1A. Phosphorylated in vitro by PKA and CK. Phosphorylation promotes DNA-binding activity. In terms of processing, acetylated by EP300 in vitro. As to expression, widely expressed, with high levels in liver, pancreas, prostate, ovary, colon, thyroid, spinal cord, trachea and adrenal gland, moderate levels in heart, placenta, lung, skeletal muscle, kidney, testis, small intestine, stomach and lymph node, and low levels in brain, spleen, thymus and bone marrow. Not detected in peripheral blood leukocytes.

The protein localises to the nucleus. It is found in the cytoplasm. It localises to the perinuclear region. Its function is as follows. Transcription regulator that converts stress signals into a program of gene expression that empowers cells with resistance to the stress induced by a change in their microenvironment. Thereby participates in the regulation of many processes namely cell-cycle, apoptosis, autophagy and DNA repair responses. Controls cell cycle progression and protects cells from genotoxic stress induced by doxorubicin through the complex formation with TP53 and EP300 that binds CDKN1A promoter leading to transcriptional induction of CDKN1A. Protects pancreatic cancer cells from stress-induced cell death by binding the RELB promoter and activating its transcription, leading to IER3 transactivation. Negatively regulates apoptosis through interaction with PTMA. Inhibits autophagy-induced apoptosis in cardiac cells through FOXO3 interaction, inducing cytoplasmic translocation of FOXO3 thereby preventing the FOXO3 association with the pro-autophagic BNIP3 promoter. Inhibits cell growth and facilitates programmed cell death by apoptosis after adriamycin-induced DNA damage through transactivation of TP53. Regulates methamphetamine-induced apoptosis and autophagy through DDIT3-mediated endoplasmic reticulum stress pathway. Participates in DNA repair following gamma-irradiation by facilitating DNA access of the transcription machinery through interaction with MSL1 leading to inhibition of histone H4' Lys-16' acetylation (H4K16ac). Coactivator of PAX2 transcription factor activity, both by recruiting EP300 to increase PAX2 transcription factor activity and by binding PAXIP1 to suppress PAXIP1-induced inhibition on PAX2. Positively regulates cell cycle progression through interaction with COPS5 inducing cytoplasmic translocation of CDKN1B leading to the CDKN1B degradation. Coordinates, through its interaction with EP300, the assiociation of MYOD1, EP300 and DDX5 to the MYOG promoter, leading to inhibition of cell-cycle progression and myogenic differentiation promotion. Negatively regulates beta cell proliferation via inhibition of cell-cycle regulatory genes expression through the suppression of their promoter activities. Also required for LHB expression and ovarian maturation. Exacerbates CNS inflammation and demyelination upon cuprizone treatment. The polypeptide is Nuclear protein 1 (Homo sapiens (Human)).